The chain runs to 272 residues: Putative phosphoenolpyruvate synthase regulatory protein (272 aa).

152 to 159 (GVSRCGKT) is a binding site for ADP.

Belongs to the pyruvate, phosphate/water dikinase regulatory protein family. PSRP subfamily.

It catalyses the reaction [pyruvate, water dikinase] + ADP = [pyruvate, water dikinase]-phosphate + AMP + H(+). It carries out the reaction [pyruvate, water dikinase]-phosphate + phosphate + H(+) = [pyruvate, water dikinase] + diphosphate. Its function is as follows. Bifunctional serine/threonine kinase and phosphorylase involved in the regulation of the phosphoenolpyruvate synthase (PEPS) by catalyzing its phosphorylation/dephosphorylation. This Pseudomonas putida (strain ATCC 47054 / DSM 6125 / CFBP 8728 / NCIMB 11950 / KT2440) protein is Putative phosphoenolpyruvate synthase regulatory protein.